A 550-amino-acid polypeptide reads, in one-letter code: Solute carrier family 22 member 6 (550 aa).

Residues Met-1–Gln-9 are Cytoplasmic-facing. The helical transmembrane segment at Val-10–Leu-30 threads the bilayer. Topologically, residues Met-31–Gln-135 are extracellular. Residues Asn-39, Asn-92, and Asn-113 are each glycosylated (N-linked (GlcNAc...) asparagine). A helical transmembrane segment spans residues Leu-136–Ala-156. Residues Asp-157–Val-164 lie on the Cytoplasmic side of the membrane. The chain crosses the membrane as a helical span at residues Leu-165–Ile-187. Residues Tyr-188–Ser-195 lie on the Extracellular side of the membrane. The chain crosses the membrane as a helical span at residues Gly-196 to Ile-216. At His-217 to Thr-224 the chain is on the cytoplasmic side. The chain crosses the membrane as a helical span at residues Leu-225–Pro-245. Residues His-246–Arg-248 are Extracellular-facing. Residues His-249 to Ile-269 traverse the membrane as a helical segment. The Cytoplasmic portion of the chain corresponds to Glu-270 to His-337. Residues Leu-338–Met-358 form a helical membrane-spanning segment. Over Asp-359–Tyr-368 the chain is Extracellular. A helical transmembrane segment spans residues Leu-369–Ile-389. Over Asn-390–Arg-395 the chain is Cytoplasmic. A helical membrane pass occupies residues Pro-396 to Pro-416. Over Gln-417 to Ser-420 the chain is Extracellular. The chain crosses the membrane as a helical span at residues Ile-421–Tyr-444. The Cytoplasmic segment spans residues Thr-445–Gln-455. The chain crosses the membrane as a helical span at residues Thr-456–Val-475. Residues Ser-476–Ser-484 lie on the Extracellular side of the membrane. The helical transmembrane segment at Met-485–Pro-505 threads the bilayer. Residues Glu-506–Leu-550 lie on the Cytoplasmic side of the membrane. The disordered stretch occupies residues Asp-514 to Leu-550.

This sequence belongs to the major facilitator (TC 2.A.1) superfamily. Organic cation transporter (TC 2.A.1.19) family. In terms of processing, glycosylated. Glycosylation is necessary for proper targeting of the transporter to the plasma membrane.

Its subcellular location is the cell membrane. The enzyme catalyses prostaglandin F2alpha(out) = prostaglandin F2alpha(in). It carries out the reaction prostaglandin E2(out) = prostaglandin E2(in). Involved in the renal elimination of endogenous and exogenous organic anions. Functions as organic anion exchanger when the uptake of one molecule of organic anion is coupled with an efflux of one molecule of endogenous dicarboxylic acid (glutarate, ketoglutarate, etc). Mediates the transport of prostaglandin E2 (PGE2) and prostaglandin F2-alpha (PGF2-alpha) and may be involved in their renal excretion. Also mediates the sodium-independent uptake of p-aminohippurate (PAH), 2,3-dimercapto-1-propanesulfonic acid (DMPS), cidofovir, adefovir, 9-(2-phosphonylmethoxyethyl) guanine (PMEG), 9-(2-phosphonylmethoxyethyl) diaminopurine (PMEDAP), ochratoxin (OTA), acyclovir (ACV), 3'-azido-3-'deoxythymidine (AZT), cimetidine (CMD), 2,4-dichloro-phenoxyacetate (2,4-D), hippurate (HA), indoleacetate (IA), indoxyl sulfate (IS) and 3-carboxy-4-methyl-5-propyl-2-furanpropionate (CMPF) and edaravone sulfate. PAH uptake is inhibited by p-chloromercuribenzenesulphonate (PCMBS), diethyl pyrocarbonate (DEPC), indomethacin, sulindac, diclofenac, carprofen, okadaic acid, benzothiazolylcysteine (BTC), S-chlorotrifluoroethylcysteine (CTFC), cysteine S-conjugates S-dichlorovinylcysteine (DCVC), furosemide, steviol, phorbol 12-myristate 13-acetate (PMA), calcium ionophore A23187, benzylpenicillin, bumetamide, losartan, probenecid, phenol red, urate, glutarate and alpha-ketoglutarate. This Pongo abelii (Sumatran orangutan) protein is Solute carrier family 22 member 6 (SLC22A6).